A 179-amino-acid chain; its full sequence is Large ribosomal subunit protein uL5 (179 aa).

The protein belongs to the universal ribosomal protein uL5 family. Part of the 50S ribosomal subunit; part of the 5S rRNA/L5/L18/L25 subcomplex. Contacts the 5S rRNA and the P site tRNA. Forms a bridge to the 30S subunit in the 70S ribosome.

Its function is as follows. This is one of the proteins that bind and probably mediate the attachment of the 5S RNA into the large ribosomal subunit, where it forms part of the central protuberance. In the 70S ribosome it contacts protein S13 of the 30S subunit (bridge B1b), connecting the 2 subunits; this bridge is implicated in subunit movement. Contacts the P site tRNA; the 5S rRNA and some of its associated proteins might help stabilize positioning of ribosome-bound tRNAs. The chain is Large ribosomal subunit protein uL5 from Clostridium beijerinckii (strain ATCC 51743 / NCIMB 8052) (Clostridium acetobutylicum).